Reading from the N-terminus, the 59-residue chain is Large ribosomal subunit protein bL32 (59 aa).

The interval 1–28 is disordered; sequence MAVQQNKKSPSKRGMHRAHDFLTDPPLA.

It belongs to the bacterial ribosomal protein bL32 family.

The protein is Large ribosomal subunit protein bL32 of Aromatoleum aromaticum (strain DSM 19018 / LMG 30748 / EbN1) (Azoarcus sp. (strain EbN1)).